The chain runs to 460 residues: Light-independent protochlorophyllide reductase subunit N (460 aa).

[4Fe-4S] cluster contacts are provided by cysteine 20, cysteine 45, and cysteine 105.

The protein belongs to the BchN/ChlN family. In terms of assembly, protochlorophyllide reductase is composed of three subunits; ChlL, ChlN and ChlB. Forms a heterotetramer of two ChlB and two ChlN subunits. [4Fe-4S] cluster serves as cofactor.

Its subcellular location is the plastid. The protein resides in the chloroplast. It carries out the reaction chlorophyllide a + oxidized 2[4Fe-4S]-[ferredoxin] + 2 ADP + 2 phosphate = protochlorophyllide a + reduced 2[4Fe-4S]-[ferredoxin] + 2 ATP + 2 H2O. Its pathway is porphyrin-containing compound metabolism; chlorophyll biosynthesis (light-independent). Component of the dark-operative protochlorophyllide reductase (DPOR) that uses Mg-ATP and reduced ferredoxin to reduce ring D of protochlorophyllide (Pchlide) to form chlorophyllide a (Chlide). This reaction is light-independent. The NB-protein (ChlN-ChlB) is the catalytic component of the complex. The chain is Light-independent protochlorophyllide reductase subunit N from Adiantum capillus-veneris (Maidenhair fern).